The sequence spans 244 residues: Monothiol glutaredoxin-4 (244 aa).

In terms of domain architecture, Thioredoxin spans 3-110; that stretch reads VVEIKSQDQF…FVKSLEILSN (108 aa). The tract at residues 116 to 143 is disordered; it reads ANNAKGPKSTSDEESSGSSDDEEDETEE. The segment covering 127–143 has biased composition (acidic residues); sequence DEESSGSSDDEEDETEE. A Glutaredoxin domain is found at 146–244; sequence NARLVKLVQA…DPEYFQHALQ (99 aa). Lys-163 lines the glutathione pocket. Cys-171 is a binding site for [2Fe-2S] cluster. Residues Arg-200, Phe-212, and 225-226 each bind glutathione; that span reads LD.

This sequence belongs to the glutaredoxin family. Monothiol subfamily. In terms of assembly, homodimer. Heterodimer with FRA2.

Monothiol glutaredoxin involved in the biogenesis of iron-sulfur clusters. Binds one iron-sulfur cluster per dimer. The iron-sulfur cluster is bound between subunits, and is complexed by a bound glutathione and a cysteine residue from each subunit. In Saccharomyces cerevisiae (strain ATCC 204508 / S288c) (Baker's yeast), this protein is Monothiol glutaredoxin-4 (GRX4).